Reading from the N-terminus, the 393-residue chain is Major outer membrane porin, serovar E (393 aa).

Residues 1-22 (MKKLLKSVLVFAALSSASSLQA) form the signal peptide.

It belongs to the chlamydial porin (CP) (TC 1.B.2) family. In terms of assembly, part of a disulfide cross-linked outer membrane complex (COMC) composed of the major outer membrane porin (MOMP), the small cysteine-rich protein (OmcA) and the large cysteine-rich periplasmic protein (OmcB).

It localises to the cell outer membrane. In terms of biological role, in elementary bodies (EBs, the infectious stage, which is able to survive outside the host cell) provides the structural integrity of the outer envelope through disulfide cross-links with the small cysteine-rich protein and the large cysteine-rich periplasmic protein. It has been described in publications as the Sarkosyl-insoluble COMC (Chlamydia outer membrane complex), and serves as the functional equivalent of peptidoglycan. Its function is as follows. Permits diffusion of specific solutes through the outer membrane. The polypeptide is Major outer membrane porin, serovar E (ompA) (Chlamydia trachomatis).